Reading from the N-terminus, the 518-residue chain is ORC1-type DNA replication protein 7 (518 aa).

94 to 98 contacts ATP; that stretch reads TGKTA. The interval 165-196 is disordered; that stretch reads DDDPNALEIGGSPGDDRTGNESSEGSDVSDSF. Low complexity predominate over residues 186–196; the sequence is SSEGSDVSDSF. Residues Tyr-318 and Arg-330 each contribute to the ATP site.

It belongs to the CDC6/cdc18 family.

In terms of biological role, involved in regulation of DNA replication. Required to initiate DNA replication of the circular chromosome at a nearby autonomously replicating sequence (ARS) oriC1. This chain is ORC1-type DNA replication protein 7 (orc7), found in Halobacterium salinarum (strain ATCC 700922 / JCM 11081 / NRC-1) (Halobacterium halobium).